A 343-amino-acid polypeptide reads, in one-letter code: MSLNWRKQKILKTIISDYIKRAEPVGSRTLTKRYEFDLSPATIRNEMADLEDMGFLEQPHTSAGRIPTERGYRFFVDELITRCLSVPQQELLLKKLTKFKALEINEIVQVTARALAEMTDYTSLVLGPQTSKSAFQEIQVFPIDQQRVLMVLTTDTGIIESKPVPVSGNLSKQELSNIVQHLNKRLKGLTIDDITPSLLKELRTDLIKEVDLVEKAMHILADSFRHSSANVALGGTKNILNQPEFNDLKKVKELLSFFENEEVLAELLSESEGIVVRIGKENPRDEVKDCSLVTASYELNGRPLGTIGVLGPTRMDYSRVIAIVAQIANELTMALDKKKITEE.

The protein belongs to the HrcA family.

Negative regulator of class I heat shock genes (grpE-dnaK-dnaJ and groELS operons). Prevents heat-shock induction of these operons. The sequence is that of Heat-inducible transcription repressor HrcA from Natranaerobius thermophilus (strain ATCC BAA-1301 / DSM 18059 / JW/NM-WN-LF).